Reading from the N-terminus, the 364-residue chain is DNA-(apurinic or apyrimidinic site) endonuclease (364 aa).

2 stretches are compositionally biased toward basic and acidic residues: residues 1–12 (MKRFFKPIEKEN) and 23–39 (PEKR…EKNQ). Residues 1–42 (MKRFFKPIEKENSPAAKKPCLSPEKRDGDGDGVEEEKNQNEP) are disordered. A Mg(2+)-binding site is contributed by Glu-80. Residue Tyr-182 is part of the active site. 3 residues coordinate Mg(2+): Asp-222, Asn-224, and Asp-342. The active-site Proton donor/acceptor is the Asp-222.

Belongs to the DNA repair enzymes AP/exoA family. As to quaternary structure, interacts with ROS1. ROS1 is required for APE1L to stably associate with the DNA substrate. Mg(2+) serves as cofactor. Expressed in leaves, flower buds and developing siliques. Not detected in roots.

The protein resides in the nucleus. It localises to the nucleolus. In terms of biological role, apurinic/apyrimidinic (AP) endonuclease involved in active DNA demethylation and gene imprinting. According to a report, also displays an in vitro 3'-phosphatase activity. According to another report, has no in vitro 3'-phosphatase activity. Catalyzes the conversion of the 3'-blocking groups 3'-phosphor-alpha,beta-unsaturated aldehyde (3'-PUA) generated by ROS1 to 3'-OH. Has a strong non-specific affinity to DNA. Redundant with APE2 and at least one functional allele is required for seed viability. This chain is DNA-(apurinic or apyrimidinic site) endonuclease, found in Arabidopsis thaliana (Mouse-ear cress).